We begin with the raw amino-acid sequence, 114 residues long: Helper of Tim protein 13 (114 aa).

The CHY-type; degenerate zinc finger occupies 10–90; it reads LVDKESRCEH…DSLQCPNCRS (81 aa). Residues Cys17, His19, Cys40, Cys43, Cys67, Cys70, Cys85, and Cys88 each contribute to the Zn(2+) site.

In terms of assembly, interacts with the small Tim proteins.

It is found in the mitochondrion intermembrane space. The protein resides in the mitochondrion membrane. Functionally, required for the assembly or recycling of the small Tim proteins in the mitochondrial intermembrane, thereby participating in the import and insertion of multi-pass transmembrane proteins into the mitochondrial inner membrane. The sequence is that of Helper of Tim protein 13 (HOT13) from Kluyveromyces lactis (strain ATCC 8585 / CBS 2359 / DSM 70799 / NBRC 1267 / NRRL Y-1140 / WM37) (Yeast).